Consider the following 623-residue polypeptide: Membrane protein insertase YidC (623 aa).

Helical transmembrane passes span 8–28 (LILATGLSFLVIMVWFFLFPP), 379–399 (MGLAIIALTFLLKALVLPLAY), 449–469 (LPILIQIPIFFSLYKVIFVTI), 507–527 (TTMALIFIGALPILLGVSMWL), and 543–563 (IFAWMPWVFMFMLGHFASGLV). Positions 601 to 617 (KPAAQPAGKAANDGAAP) are enriched in low complexity. The tract at residues 601–623 (KPAAQPAGKAANDGAAPAKKRKP) is disordered.

Belongs to the OXA1/ALB3/YidC family. Type 1 subfamily. In terms of assembly, interacts with the Sec translocase complex via SecD. Specifically interacts with transmembrane segments of nascent integral membrane proteins during membrane integration.

The protein resides in the cell inner membrane. Its function is as follows. Required for the insertion and/or proper folding and/or complex formation of integral membrane proteins into the membrane. Involved in integration of membrane proteins that insert both dependently and independently of the Sec translocase complex, as well as at least some lipoproteins. Aids folding of multispanning membrane proteins. The chain is Membrane protein insertase YidC from Cereibacter sphaeroides (strain ATCC 17029 / ATH 2.4.9) (Rhodobacter sphaeroides).